Here is a 67-residue protein sequence, read N- to C-terminus: Phycobilisome 7.8 kDa linker polypeptide, allophycocyanin-associated, core (67 aa).

In terms of domain architecture, CpcD-like spans 1–56; sequence GRLFKITACVPSQTRIRTQRELQNTYFTKLVPYENWFREQQRIQKMGGKIVKVELA.

Belongs to the phycobilisome linker protein family.

The protein localises to the cellular thylakoid membrane. Its function is as follows. Rod linker protein, associated with allophycocyanin. Linker polypeptides determine the state of aggregation and the location of the disk-shaped phycobiliprotein units within the phycobilisome and modulate their spectroscopic properties in order to mediate a directed and optimal energy transfer. This is Phycobilisome 7.8 kDa linker polypeptide, allophycocyanin-associated, core (apcC) from Mastigocladus laminosus (Fischerella sp.).